We begin with the raw amino-acid sequence, 98 residues long: MMKRLIPTFNRILVQRVIQPAKTESGILLPEKSSKLNSGKVIAVGPGSRDKDGKLIPVSVKEGDTVLLPEYGGTQVKLGENEYHLFRDEDVLGTLHED.

Residues 1–17 constitute a mitochondrion transit peptide; sequence MMKRLIPTFNRILVQRV. The segment at 18-94 is cpn-10 domain; that stretch reads IQPAKTESGI…LFRDEDVLGT (77 aa).

This sequence belongs to the GroES chaperonin family. Forms stable complexes with CPN60 in the presence of ATP.

Its subcellular location is the mitochondrion. In terms of biological role, seems to function only as a co-chaperone, along with CPN60, and in certain cases is essential for the discharge of biologically active proteins from CPN60. The polypeptide is 10 kDa chaperonin, mitochondrial (CPN10) (Arabidopsis thaliana (Mouse-ear cress)).